A 145-amino-acid polypeptide reads, in one-letter code: UPF0201 protein M164_1168 (145 aa).

The protein belongs to the UPF0201 family.

In Saccharolobus islandicus (strain M.16.4 / Kamchatka #3) (Sulfolobus islandicus), this protein is UPF0201 protein M164_1168.